The following is a 570-amino-acid chain: Potassium-transporting ATPase potassium-binding subunit (570 aa).

11 consecutive transmembrane segments (helical) span residues 7 to 27 (AEIA…GVFL), 65 to 85 (AYAL…YAVL), 95 to 115 (PQGF…SFIT), 135 to 155 (LVLT…AAAL), 179 to 199 (LYLL…LGLP), 254 to 274 (LTNL…FFAF), 286 to 306 (ALVI…YATE), 383 to 403 (GVAI…LMVG), 422 to 442 (ILAV…AAVL), 489 to 509 (LGIA…AIAG), and 528 to 548 (GGLF…LQFF).

This sequence belongs to the KdpA family. In terms of assembly, the system is composed of three essential subunits: KdpA, KdpB and KdpC.

Its subcellular location is the cell inner membrane. Part of the high-affinity ATP-driven potassium transport (or Kdp) system, which catalyzes the hydrolysis of ATP coupled with the electrogenic transport of potassium into the cytoplasm. This subunit binds the periplasmic potassium ions and delivers the ions to the membrane domain of KdpB through an intramembrane tunnel. This is Potassium-transporting ATPase potassium-binding subunit from Caulobacter vibrioides (strain ATCC 19089 / CIP 103742 / CB 15) (Caulobacter crescentus).